The sequence spans 217 residues: Protein GrpE (217 aa).

It belongs to the GrpE family. As to quaternary structure, homodimer.

It localises to the cytoplasm. Functionally, participates actively in the response to hyperosmotic and heat shock by preventing the aggregation of stress-denatured proteins, in association with DnaK and GrpE. It is the nucleotide exchange factor for DnaK and may function as a thermosensor. Unfolded proteins bind initially to DnaJ; upon interaction with the DnaJ-bound protein, DnaK hydrolyzes its bound ATP, resulting in the formation of a stable complex. GrpE releases ADP from DnaK; ATP binding to DnaK triggers the release of the substrate protein, thus completing the reaction cycle. Several rounds of ATP-dependent interactions between DnaJ, DnaK and GrpE are required for fully efficient folding. The protein is Protein GrpE of Mycoplasma pneumoniae (strain ATCC 29342 / M129 / Subtype 1) (Mycoplasmoides pneumoniae).